Reading from the N-terminus, the 748-residue chain is WD repeat-containing protein 91 (748 aa).

Positions 183-228 (QRTNQVQEENEVLRQKLFALQAEIHRLKKEEQQQEEEAAALVQHKL) form a coiled coil. Ser-257 carries the phosphoserine modification. Over residues 266 to 279 (LLPQSKKSPSRLSP) the composition is skewed to low complexity. Residues 266 to 368 (LLPQSKKSPS…PEVSGAEAEP (103 aa)) form a disordered region. Positions 284–300 (PQAQSSAKKDSFSSQAT) are enriched in polar residues. Residues Ser-289 and Ser-294 each carry the phosphoserine modification. Positions 333–344 (RLQDHGKERREL) are enriched in basic and acidic residues. Over residues 345–354 (LSTSSSQSQC) the composition is skewed to polar residues. WD repeat units lie at residues 407–446 (EHHSSIMHCRVDCSGRRVASLDVDGVIKVWSFNPIMQTKA), 449–489 (ISKS…NLCE), 512–556 (VCSA…QQLQ), 561–600 (PEPIAINCTAFNHNGNLLVTGAADGVIRLFDMQQHECAMS), 603–642 (AHCGEVYSVEFSCDENAVYSIGEDRKFIQWNIHKSGLKVS), 665–703 (VQVPRGRLFAFDSEGNYMLTCSATGGLIYKLGSEEKVLE), and 710–748 (GHRAPVVTVDWSTAMDCGTCLTASMDGKIKLTTLLAHKL).

The protein belongs to the WD repeat WDR91 family. In terms of assembly, interacts with WDR81; involved in early to late endosome cargo transport. Interacts with BECN1; negatively regulates the PI3 kinase/PI3K activity associated with endosomal membranes.

Its subcellular location is the early endosome membrane. The protein localises to the late endosome membrane. Its function is as follows. Functions as a negative regulator of the PI3 kinase/PI3K activity associated with endosomal membranes via BECN1, a core subunit of the PI3K complex. By modifying the phosphatidylinositol 3-phosphate/PtdInsP3 content of endosomal membranes may regulate endosome fusion, recycling, sorting and early to late endosome transport. It is for instance, required for the delivery of cargos like BST2/tetherin from early to late endosome and thereby participates indirectly to their degradation by the lysosome. May play a role in meiosis. This chain is WD repeat-containing protein 91, found in Mus musculus (Mouse).